The sequence spans 277 residues: Glutamate racemase (277 aa).

Substrate-binding positions include 25-26 and 57-58; these read DS and YG. Residue cysteine 89 is the Proton donor/acceptor of the active site. 90–91 is a binding site for substrate; sequence NT. Cysteine 204 (proton donor/acceptor) is an active-site residue. 205–206 lines the substrate pocket; the sequence is TH.

It belongs to the aspartate/glutamate racemases family.

It catalyses the reaction L-glutamate = D-glutamate. It participates in cell wall biogenesis; peptidoglycan biosynthesis. Its function is as follows. Provides the (R)-glutamate required for cell wall biosynthesis. This chain is Glutamate racemase, found in Brucella abortus (strain 2308).